We begin with the raw amino-acid sequence, 559 residues long: DNA ligase (559 aa).

Glu-247 is an ATP binding site. Lys-249 (N6-AMP-lysine intermediate) is an active-site residue. 6 residues coordinate ATP: Arg-254, Arg-269, Glu-299, Phe-339, Arg-414, and Lys-420.

This sequence belongs to the ATP-dependent DNA ligase family. Mg(2+) is required as a cofactor.

The catalysed reaction is ATP + (deoxyribonucleotide)n-3'-hydroxyl + 5'-phospho-(deoxyribonucleotide)m = (deoxyribonucleotide)n+m + AMP + diphosphate.. Functionally, DNA ligase that seals nicks in double-stranded DNA during DNA replication, DNA recombination and DNA repair. This chain is DNA ligase, found in Pyrococcus abyssi.